The following is a 66-amino-acid chain: Movement protein TGBp3 (66 aa).

The Lumenal segment spans residues 1-2 (MD). A helical transmembrane segment spans residues 3–23 (FTTLVIIGVYLLVFIVYFAKI). Over 24–66 (NTSMCTISISGASVEISGCDNPALFEILPNLKPFDHGLSVPSI) the chain is Cytoplasmic.

It belongs to the Tymovirales TGBp3 protein family.

The protein resides in the host endoplasmic reticulum membrane. Functionally, plays a role in viral cell-to-cell propagation, by facilitating genome transport to neighboring plant cells through plasmosdesmata. May induce the formation of granular vesicles derived from the Endoplasmic reticulum, which align on actin filaments. This Trifolium (WCMV) protein is Movement protein TGBp3.